The primary structure comprises 271 residues: Digeranylgeranylglyceryl phosphate synthase (271 aa).

A run of 8 helical transmembrane segments spans residues 11-31 (INCA…GARL), 33-53 (VGAV…NAIN), 88-108 (FAVG…IAAL), 125-145 (LIGN…GAAV), 149-169 (PAPA…REIL), 201-221 (VFAI…VVGW), 224-244 (LVLA…AVAG), and 251-271 (AQRV…ASLL).

Belongs to the UbiA prenyltransferase family. DGGGP synthase subfamily. Mg(2+) is required as a cofactor.

The protein resides in the cell membrane. The catalysed reaction is sn-3-O-(geranylgeranyl)glycerol 1-phosphate + (2E,6E,10E)-geranylgeranyl diphosphate = 2,3-bis-O-(geranylgeranyl)-sn-glycerol 1-phosphate + diphosphate. The protein operates within membrane lipid metabolism; glycerophospholipid metabolism. Prenyltransferase that catalyzes the transfer of the geranylgeranyl moiety of geranylgeranyl diphosphate (GGPP) to the C2 hydroxyl of (S)-3-O-geranylgeranylglyceryl phosphate (GGGP). This reaction is the second ether-bond-formation step in the biosynthesis of archaeal membrane lipids. This is Digeranylgeranylglyceryl phosphate synthase from Methanopyrus kandleri (strain AV19 / DSM 6324 / JCM 9639 / NBRC 100938).